The chain runs to 74 residues: ATP synthase subunit c (74 aa).

2 consecutive transmembrane segments (helical) span residues 8-28 and 52-72; these read FIGI…VSNI and IGAG…MLLI.

This sequence belongs to the ATPase C chain family. In terms of assembly, F-type ATPases have 2 components, F(1) - the catalytic core - and F(0) - the membrane proton channel. F(1) has five subunits: alpha(3), beta(3), gamma(1), delta(1), epsilon(1). F(0) has three main subunits: a(1), b(2) and c(10-14). The alpha and beta chains form an alternating ring which encloses part of the gamma chain. F(1) is attached to F(0) by a central stalk formed by the gamma and epsilon chains, while a peripheral stalk is formed by the delta and b chains.

It is found in the cell inner membrane. Functionally, f(1)F(0) ATP synthase produces ATP from ADP in the presence of a proton or sodium gradient. F-type ATPases consist of two structural domains, F(1) containing the extramembraneous catalytic core and F(0) containing the membrane proton channel, linked together by a central stalk and a peripheral stalk. During catalysis, ATP synthesis in the catalytic domain of F(1) is coupled via a rotary mechanism of the central stalk subunits to proton translocation. Key component of the F(0) channel; it plays a direct role in translocation across the membrane. A homomeric c-ring of between 10-14 subunits forms the central stalk rotor element with the F(1) delta and epsilon subunits. In Rickettsia typhi (strain ATCC VR-144 / Wilmington), this protein is ATP synthase subunit c.